The chain runs to 316 residues: 4-hydroxy-3-methylbut-2-enyl diphosphate reductase (316 aa).

Cysteine 12 contributes to the [4Fe-4S] cluster binding site. Histidine 41 and histidine 74 together coordinate (2E)-4-hydroxy-3-methylbut-2-enyl diphosphate. Positions 41 and 74 each coordinate dimethylallyl diphosphate. Residues histidine 41 and histidine 74 each contribute to the isopentenyl diphosphate site. Cysteine 96 serves as a coordination point for [4Fe-4S] cluster. A (2E)-4-hydroxy-3-methylbut-2-enyl diphosphate-binding site is contributed by histidine 124. Position 124 (histidine 124) interacts with dimethylallyl diphosphate. An isopentenyl diphosphate-binding site is contributed by histidine 124. Glutamate 126 acts as the Proton donor in catalysis. (2E)-4-hydroxy-3-methylbut-2-enyl diphosphate is bound at residue threonine 167. Cysteine 197 serves as a coordination point for [4Fe-4S] cluster. The (2E)-4-hydroxy-3-methylbut-2-enyl diphosphate site is built by serine 225, serine 226, asparagine 227, and serine 269. The dimethylallyl diphosphate site is built by serine 225, serine 226, asparagine 227, and serine 269. Isopentenyl diphosphate is bound by residues serine 225, serine 226, asparagine 227, and serine 269.

It belongs to the IspH family. In terms of assembly, homodimer. [4Fe-4S] cluster serves as cofactor.

It carries out the reaction isopentenyl diphosphate + 2 oxidized [2Fe-2S]-[ferredoxin] + H2O = (2E)-4-hydroxy-3-methylbut-2-enyl diphosphate + 2 reduced [2Fe-2S]-[ferredoxin] + 2 H(+). The catalysed reaction is dimethylallyl diphosphate + 2 oxidized [2Fe-2S]-[ferredoxin] + H2O = (2E)-4-hydroxy-3-methylbut-2-enyl diphosphate + 2 reduced [2Fe-2S]-[ferredoxin] + 2 H(+). The protein operates within isoprenoid biosynthesis; dimethylallyl diphosphate biosynthesis; dimethylallyl diphosphate from (2E)-4-hydroxy-3-methylbutenyl diphosphate: step 1/1. It participates in isoprenoid biosynthesis; isopentenyl diphosphate biosynthesis via DXP pathway; isopentenyl diphosphate from 1-deoxy-D-xylulose 5-phosphate: step 6/6. Functionally, catalyzes the conversion of 1-hydroxy-2-methyl-2-(E)-butenyl 4-diphosphate (HMBPP) into a mixture of isopentenyl diphosphate (IPP) and dimethylallyl diphosphate (DMAPP). Acts in the terminal step of the DOXP/MEP pathway for isoprenoid precursor biosynthesis. The chain is 4-hydroxy-3-methylbut-2-enyl diphosphate reductase from Escherichia coli (strain ATCC 8739 / DSM 1576 / NBRC 3972 / NCIMB 8545 / WDCM 00012 / Crooks).